The primary structure comprises 387 residues: Succinate--CoA ligase [ADP-forming] subunit beta (387 aa).

One can recognise an ATP-grasp domain in the interval 9–244 (KRLLAEEGVP…STQQDGREIT (236 aa)). Residues Lys46, 53–55 (GRG), Glu99, Ser102, and Glu107 contribute to the ATP site. The Mg(2+) site is built by Asn199 and Asp213. Substrate is bound by residues Asn264 and 321 to 323 (GIT).

This sequence belongs to the succinate/malate CoA ligase beta subunit family. As to quaternary structure, heterotetramer of two alpha and two beta subunits. It depends on Mg(2+) as a cofactor.

The enzyme catalyses succinate + ATP + CoA = succinyl-CoA + ADP + phosphate. It catalyses the reaction GTP + succinate + CoA = succinyl-CoA + GDP + phosphate. Its pathway is carbohydrate metabolism; tricarboxylic acid cycle; succinate from succinyl-CoA (ligase route): step 1/1. Its function is as follows. Succinyl-CoA synthetase functions in the citric acid cycle (TCA), coupling the hydrolysis of succinyl-CoA to the synthesis of either ATP or GTP and thus represents the only step of substrate-level phosphorylation in the TCA. The beta subunit provides nucleotide specificity of the enzyme and binds the substrate succinate, while the binding sites for coenzyme A and phosphate are found in the alpha subunit. The sequence is that of Succinate--CoA ligase [ADP-forming] subunit beta from Acidithiobacillus ferrooxidans (strain ATCC 23270 / DSM 14882 / CIP 104768 / NCIMB 8455) (Ferrobacillus ferrooxidans (strain ATCC 23270)).